The primary structure comprises 265 residues: tRNA pseudouridine synthase A (265 aa).

Aspartate 53 functions as the Nucleophile in the catalytic mechanism. Residue tyrosine 111 coordinates substrate.

This sequence belongs to the tRNA pseudouridine synthase TruA family. In terms of assembly, homodimer.

The catalysed reaction is uridine(38/39/40) in tRNA = pseudouridine(38/39/40) in tRNA. Formation of pseudouridine at positions 38, 39 and 40 in the anticodon stem and loop of transfer RNAs. This Acinetobacter baumannii (strain SDF) protein is tRNA pseudouridine synthase A.